Consider the following 222-residue polypeptide: E3 ubiquitin-protein ligase RNF138 (222 aa).

The segment at 17 to 57 adopts an RING-type zinc-finger fold; the sequence is CPVCQEILQTPVRTQTCRHVFCRKCFMLAMKSGGAYCPLCR. Residues C85, C88, H100, and C104 each contribute to the Zn(2+) site. The C2HC RNF-type zinc finger occupies 85-104; it reads CMYCGKMMKLHYMKLHYKSC. 2 consecutive C2H2-type zinc fingers follow at residues 134 to 157 and 164 to 192; these read YKCP…NNVH and MVCP…NARH. The region spanning 202-220 is the UIM domain; it reads INIDEEAQFQIAVANSYKI.

As to quaternary structure, interacts with nlk.2 (via C-terminus) and ube2k. Post-translationally, auto-ubiquitinated.

Its subcellular location is the chromosome. It catalyses the reaction S-ubiquitinyl-[E2 ubiquitin-conjugating enzyme]-L-cysteine + [acceptor protein]-L-lysine = [E2 ubiquitin-conjugating enzyme]-L-cysteine + N(6)-ubiquitinyl-[acceptor protein]-L-lysine.. It participates in protein modification; protein ubiquitination. Its function is as follows. E3 ubiquitin-protein ligase involved in DNA damage response by promoting DNA resection and homologous recombination. Recruited to sites of double-strand breaks following DNA damage and specifically promotes double-strand break repair via homologous recombination. Together with nlk.2, involved in the ubiquitination and degradation of TCF/LEF. Also exhibits auto-ubiquitination activity in combination with ube2k. May act as a negative regulator in the Wnt/beta-catenin-mediated signaling pathway. This Xenopus laevis (African clawed frog) protein is E3 ubiquitin-protein ligase RNF138 (rnf138).